Here is a 2561-residue protein sequence, read N- to C-terminus: Squalestatin hexaketide synthase (2561 aa).

The tract at residues 1–77 (MDVSKEEGQR…NGTTNITPEF (77 aa)) is disordered. Over residues 20 to 74 (NETTNGHTNGYTNGHTNGHTNGTTNATTNGTTNGTMNGTTNGTTNRTTNGTTNIT) the composition is skewed to low complexity. Residues 83 to 503 (QVPVAICGIG…GSNTHIIIDS (421 aa)) form the Ketosynthase family 3 (KS3) domain. Residues Cys253, His390, and His427 each act as for beta-ketoacyl synthase activity in the active site. The malonyl-CoA:ACP transacylase (MAT) domain stretch occupies residues 603–925 (FIFTGQGAQW…LEAIGKLFCF (323 aa)). An N-terminal hotdog fold region spans residues 972–1101 (HELLGERSLE…GLVTASVVIS (130 aa)). Positions 972–1253 (HELLGERSLE…RGFKCKRTDE (282 aa)) are dehydratase (DH) domain. Residues 972 to 1257 (HELLGERSLE…CKRTDESFIQ (286 aa)) form the PKS/mFAS DH domain. His1004 functions as the Proton acceptor; for dehydratase activity in the catalytic mechanism. The interval 1112 to 1257 (TFPRKVDTSR…CKRTDESFIQ (146 aa)) is C-terminal hotdog fold. Catalysis depends on Asp1174, which acts as the Proton donor; for dehydratase activity. A methyltransferase (CMet) domain region spans residues 1421–1599 (SFFQAAGLNK…GFEGAGTVVL (179 aa)). Residues 1826-2146 (GMLNTLHWVG…RGVHMGRIVV (321 aa)) form an enoyl reductase (ER) (ER) domain region. A ketoreductase (KR) domain region spans residues 2170–2343 (STYLLTGGMG…PASVIDIAAI (174 aa)). Residues 2472–2550 (VLFAQEIAKR…SLGRLATKRL (79 aa)) form the Carrier domain. The residue at position 2509 (Ser2509) is an O-(pantetheine 4'-phosphoryl)serine.

The protein operates within secondary metabolite biosynthesis. Functionally, highly reducing polyketide synthase (HR-PKS); part of the gene cluster that mediates the biosynthesis of squalestatin S1 (SQS1, also known as zaragozic acid A), a heavily oxidized fungal polyketide that offers potent cholesterol lowering activity by targeting squalene synthase (SS). SQS1 is composed of a 2,8-dioxobicyclic[3.2.1]octane-3,4,5-tricarboxyclic acid core that is connected to two lipophilic polyketide arms. These initial steps feature the priming of an unusual benzoic acid starter unit onto the highly reducing polyketide synthase pks2, followed by oxaloacetate extension and product release to generate a tricarboxylic acid containing product. The phenylalanine ammonia lyase (PAL) M7 and the acyl-CoA ligase M9 are involved in transforming phenylalanine into benzoyl-CoA. The citrate synthase-like protein R3 is involved in connecting the C-alpha-carbons of the hexaketide chain and oxaloacetate to afford the tricarboxylic acid unit. The potential hydrolytic enzymes, M8 and M10, are in close proximity to pks2 and may participate in product release. On the other side, the tetraketide arm is synthesized by a the squalestatin tetraketide synthase pks1 and enzymatically esterified to the core in the last biosynthetic step, by the acetyltransferase M4. The biosynthesis of the tetraketide must involve 3 rounds of chain extension. After the first and second rounds methyl-transfer occurs, and in all rounds of extension the ketoreductase and dehydratase are active. The enoyl reductase and C-MeT of pks1 are not active in the final round of extension. The acetyltransferase M4 appears to have a broad substrate selectivity for its acyl CoA substrate, allowing the in vitro synthesis of novel squalestatins. The biosynthesis of SQS1 requires several oxidative steps likely performed by oxidoreductases M1, R1 and R2. Finally, in support of the identification of the cluster as being responsible for SQS1 production, the cluster contains a gene encoding a putative squalene synthase (SS) R6, suggesting a likely mechanism for self-resistance. This chain is Squalestatin hexaketide synthase, found in Phoma sp. (strain ATCC 20986 / MF5453).